We begin with the raw amino-acid sequence, 455 residues long: uncharacterized protein (455 aa).

Positions 1–27 (MSQRQQFQFLLSFLILIFLKFIIQIRC) are cleaved as a signal peptide. Topologically, residues 29 to 434 (ESNGVIIIKN…GDDENLINSS (406 aa)) are extracellular. 4 N-linked (GlcNAc...) asparagine glycosylation sites follow: asparagine 136, asparagine 148, asparagine 210, and asparagine 298. Residues 383–402 (SSSTTSTTSSSSSSSSSTTT) form a disordered region. Asparagine 421 and asparagine 432 each carry an N-linked (GlcNAc...) asparagine glycan. A helical membrane pass occupies residues 435–455 (SVIKFSTPIIMIIIILINIKF).

It is found in the membrane. This is an uncharacterized protein from Dictyostelium discoideum (Social amoeba).